A 436-amino-acid chain; its full sequence is Gamma-glutamyl phosphate reductase (436 aa).

It belongs to the gamma-glutamyl phosphate reductase family.

The protein resides in the cytoplasm. It carries out the reaction L-glutamate 5-semialdehyde + phosphate + NADP(+) = L-glutamyl 5-phosphate + NADPH + H(+). The protein operates within amino-acid biosynthesis; L-proline biosynthesis; L-glutamate 5-semialdehyde from L-glutamate: step 2/2. Functionally, catalyzes the NADPH-dependent reduction of L-glutamate 5-phosphate into L-glutamate 5-semialdehyde and phosphate. The product spontaneously undergoes cyclization to form 1-pyrroline-5-carboxylate. The polypeptide is Gamma-glutamyl phosphate reductase (Prochlorococcus marinus (strain MIT 9215)).